Here is a 751-residue protein sequence, read N- to C-terminus: MTISPPEREAKKVKIVVDRDPVETSFEKWAKPGHFSRTLSKGPTTTTWIWNLHADAHDFDAQTTDLEEISRKVFSAHFGQLGIIFIWLSGMYFHGARFSNYEAWLSDPTHIKPSAQVVWPIVGQEILNGDVGGGFQGIQITSGFFQLWRASGITTELQLYSTAIGGLVMAAAMFFAGWFHFHKSAPKLEWFQNVESMLNHHLSGLLGLGSLAWAGHQIHVSLPINKLLDAGVDPHEIPLPHELILNPSLMAQLYPSFKQGLAPFFTLNWSEYSDFLTFQGGLNPVTGGLWLTDTAHHHLAIAVLFIVAGHMYRTNWGIGHSMKEILDAHKGPFTGEGHKGLYEILTTSWHAQLAINLALFGSLSIIVAHHQYSMPPYPYLATDYATQLSLFTHHNWIGGFCIVGAAAHAAIFMIRDYDPTNNYNNLLDRVIRHRDAIISHLNWVCIFLGFHSFGLYIHNDTMSALGRPADMFSDTAIQLQPVFAQWIQKTHFLAPGFTAPNALASTSPSWGGDVVAVGGKVAMMPISLGTSDFLVHHVHAFTIHVTVLILLKGVLYARSSRLIPDKANLGFRFPCDGPGRGGTCQVSAWDHVFLGLFWMYNAISVVIFHFSWKMQSDVWGTVNASGISHITGGNFAQSANTINGWLRDFLWAQSSQVIQSYGSSLSAYGLIFLGAHFVWAFSLMFLFSGRGYWQELIESIVWAHNKLKVAPAIQPRALSITQGRAVGVAHYLLGGIATTWSFFLARIIAVG.

A run of 8 helical transmembrane segments spans residues 73–96 (VFSA…FHGA), 159–182 (LYST…FHFH), 198–222 (LNHH…HVSL), 294–312 (TAHH…GHMY), 349–372 (WHAQ…HHQY), 388–414 (LSLF…IFMI), 436–458 (AIIS…LYIH), and 533–551 (FLVH…LILL). [4Fe-4S] cluster-binding residues include cysteine 575 and cysteine 584. Transmembrane regions (helical) follow at residues 591–612 (HVFL…HFSW) and 665–687 (LSAY…MFLF). Position 676 (histidine 676) interacts with chlorophyll a'. Chlorophyll a is bound by residues methionine 684 and tyrosine 692. Tryptophan 693 contacts phylloquinone. Residues 725-745 (AVGVAHYLLGGIATTWSFFLA) traverse the membrane as a helical segment.

Belongs to the PsaA/PsaB family. The PsaA/B heterodimer binds the P700 chlorophyll special pair and subsequent electron acceptors. PSI consists of a core antenna complex that captures photons, and an electron transfer chain that converts photonic excitation into a charge separation. The eukaryotic PSI reaction center is composed of at least 11 subunits. The cofactor is P700 is a chlorophyll a/chlorophyll a' dimer, A0 is one or more chlorophyll a, A1 is one or both phylloquinones and FX is a shared 4Fe-4S iron-sulfur center..

The protein localises to the plastid. It is found in the chloroplast thylakoid membrane. It catalyses the reaction reduced [plastocyanin] + hnu + oxidized [2Fe-2S]-[ferredoxin] = oxidized [plastocyanin] + reduced [2Fe-2S]-[ferredoxin]. Its function is as follows. PsaA and PsaB bind P700, the primary electron donor of photosystem I (PSI), as well as the electron acceptors A0, A1 and FX. PSI is a plastocyanin/cytochrome c6-ferredoxin oxidoreductase, converting photonic excitation into a charge separation, which transfers an electron from the donor P700 chlorophyll pair to the spectroscopically characterized acceptors A0, A1, FX, FA and FB in turn. Oxidized P700 is reduced on the lumenal side of the thylakoid membrane by plastocyanin or cytochrome c6. This Tupiella akineta (Green alga) protein is Photosystem I P700 chlorophyll a apoprotein A1.